Reading from the N-terminus, the 240-residue chain is Uridylate kinase (240 aa).

ATP is bound at residue K13–G16. The segment at G21–G26 is involved in allosteric activation by GTP. A UMP-binding site is contributed by G55. The ATP site is built by G56 and R60. UMP is bound by residues D75 and T136–T143. The ATP site is built by T163, Q164, Y169, and D172.

This sequence belongs to the UMP kinase family. In terms of assembly, homohexamer.

It is found in the cytoplasm. The enzyme catalyses UMP + ATP = UDP + ADP. The protein operates within pyrimidine metabolism; CTP biosynthesis via de novo pathway; UDP from UMP (UMPK route): step 1/1. Allosterically activated by GTP. Inhibited by UTP. Catalyzes the reversible phosphorylation of UMP to UDP. The chain is Uridylate kinase from Brucella suis biovar 1 (strain 1330).